The sequence spans 254 residues: L-erythrulose-1-phosphate isomerase (254 aa).

Catalysis depends on His97, which acts as the Electrophile. The active-site Proton acceptor is Glu170. 2 residues coordinate substrate: Gly176 and Ser213.

This sequence belongs to the triosephosphate isomerase family. Homodimer.

The protein localises to the cytoplasm. The catalysed reaction is L-erythrulose 1-phosphate = D-erythrulose 4-phosphate. It participates in carbohydrate metabolism; erythritol degradation. Catalyzes the isomerization of D-erythrulose-4P to L-erythrulose-1P. The protein is L-erythrulose-1-phosphate isomerase of Mesorhizobium japonicum (strain LMG 29417 / CECT 9101 / MAFF 303099) (Mesorhizobium loti (strain MAFF 303099)).